A 386-amino-acid polypeptide reads, in one-letter code: Succinate--CoA ligase [ADP-forming] subunit beta (386 aa).

Residues 9–244 (KEILRKYGVP…HDEEDPLETR (236 aa)) enclose the ATP-grasp domain. ATP-binding positions include Lys46, 53-55 (GRG), Glu99, Cys102, and Glu107. 2 residues coordinate Mg(2+): Asn199 and Asp213. Substrate is bound by residues Asn264 and 321–323 (GIM).

Belongs to the succinate/malate CoA ligase beta subunit family. Heterotetramer of two alpha and two beta subunits. Mg(2+) is required as a cofactor.

The enzyme catalyses succinate + ATP + CoA = succinyl-CoA + ADP + phosphate. It catalyses the reaction GTP + succinate + CoA = succinyl-CoA + GDP + phosphate. The protein operates within carbohydrate metabolism; tricarboxylic acid cycle; succinate from succinyl-CoA (ligase route): step 1/1. Succinyl-CoA synthetase functions in the citric acid cycle (TCA), coupling the hydrolysis of succinyl-CoA to the synthesis of either ATP or GTP and thus represents the only step of substrate-level phosphorylation in the TCA. The beta subunit provides nucleotide specificity of the enzyme and binds the substrate succinate, while the binding sites for coenzyme A and phosphate are found in the alpha subunit. This is Succinate--CoA ligase [ADP-forming] subunit beta from Rickettsia felis (strain ATCC VR-1525 / URRWXCal2) (Rickettsia azadi).